The primary structure comprises 134 residues: Phosphoribosyl-ATP pyrophosphatase (134 aa).

The protein belongs to the PRA-PH family.

It localises to the cytoplasm. The enzyme catalyses 1-(5-phospho-beta-D-ribosyl)-ATP + H2O = 1-(5-phospho-beta-D-ribosyl)-5'-AMP + diphosphate + H(+). Its pathway is amino-acid biosynthesis; L-histidine biosynthesis; L-histidine from 5-phospho-alpha-D-ribose 1-diphosphate: step 2/9. The chain is Phosphoribosyl-ATP pyrophosphatase from Verminephrobacter eiseniae (strain EF01-2).